The chain runs to 357 residues: Peptide chain release factor 1 (357 aa).

Glutamine 236 bears the N5-methylglutamine mark.

It belongs to the prokaryotic/mitochondrial release factor family. In terms of processing, methylated by PrmC. Methylation increases the termination efficiency of RF1.

It is found in the cytoplasm. Functionally, peptide chain release factor 1 directs the termination of translation in response to the peptide chain termination codons UAG and UAA. The protein is Peptide chain release factor 1 of Mycobacterium sp. (strain JLS).